The primary structure comprises 602 residues: Prostaglandin G/H synthase 1 (602 aa).

A signal peptide spans 1–26 (MSRRSLSLWFPLLLLLLLPPTPSVLL). The region spanning 34 to 72 (PVNPCCYYPCQNQGVCVRFGLDNYQCDCTRTGYSGPNCT) is the EGF-like domain. 4 cysteine pairs are disulfide-bonded: Cys38/Cys49, Cys39/Cys161, Cys43/Cys59, and Cys61/Cys71. 3 N-linked (GlcNAc...) asparagine glycosylation sites follow: Asn70, Asn106, and Asn146. His209 serves as the catalytic Proton acceptor. Tyr387 (for cyclooxygenase activity) is an active-site residue. Residue His390 participates in heme b binding. Cys571 and Cys577 are joined by a disulfide.

This sequence belongs to the prostaglandin G/H synthase family. Homodimer. Requires heme b as cofactor.

It localises to the microsome membrane. It is found in the endoplasmic reticulum membrane. The enzyme catalyses (5Z,8Z,11Z,14Z)-eicosatetraenoate + AH2 + 2 O2 = prostaglandin H2 + A + H2O. It carries out the reaction (5Z,8Z,11Z,14Z)-eicosatetraenoate + 2 O2 = prostaglandin G2. The catalysed reaction is prostaglandin G2 + AH2 = prostaglandin H2 + A + H2O. It catalyses the reaction (9Z,12Z)-octadecadienoate + AH2 + O2 = (9R)-hydroxy-(10E,12Z)-octadecadienoate + A + H2O. The enzyme catalyses (9Z,12Z)-octadecadienoate + AH2 + O2 = (9S)-hydroxy-(10E,12Z)-octadecadienoate + A + H2O. It carries out the reaction (9Z,12Z)-octadecadienoate + AH2 + O2 = (13S)-hydroxy-(9Z,11E)-octadecadienoate + A + H2O. The catalysed reaction is (9Z,12Z)-octadecadienoate + AH2 + O2 = (13R)-hydroxy-(9Z,11E)-octadecadienoate + A + H2O. It functions in the pathway lipid metabolism; prostaglandin biosynthesis. With respect to regulation, the cyclooxygenase activity is inhibited by nonsteroidal anti-inflammatory drugs (NSAIDs) including ibuprofen, flurbiprofen, ketoprofen, naproxen, flurbiprofen, anirolac, fenclofenac and diclofenac. Functionally, dual cyclooxygenase and peroxidase that plays an important role in the biosynthesis pathway of prostanoids, a class of C20 oxylipins mainly derived from arachidonate ((5Z,8Z,11Z,14Z)-eicosatetraenoate, AA, C20:4(n-6)), with a particular role in the inflammatory response. The cyclooxygenase activity oxygenates AA to the hydroperoxy endoperoxide prostaglandin G2 (PGG2), and the peroxidase activity reduces PGG2 to the hydroxy endoperoxide prostaglandin H2 (PGH2), the precursor of all 2-series prostaglandins and thromboxanes. This complex transformation is initiated by abstraction of hydrogen at carbon 13 (with S-stereochemistry), followed by insertion of molecular O2 to form the endoperoxide bridge between carbon 9 and 11 that defines prostaglandins. The insertion of a second molecule of O2 (bis-oxygenase activity) yields a hydroperoxy group in PGG2 that is then reduced to PGH2 by two electrons. Involved in the constitutive production of prostanoids in particular in the stomach and platelets. In gastric epithelial cells, it is a key step in the generation of prostaglandins, such as prostaglandin E2 (PGE2), which plays an important role in cytoprotection. In platelets, it is involved in the generation of thromboxane A2 (TXA2), which promotes platelet activation and aggregation, vasoconstriction and proliferation of vascular smooth muscle cells. Can also use linoleate (LA, (9Z,12Z)-octadecadienoate, C18:2(n-6)) as substrate and produce hydroxyoctadecadienoates (HODEs) in a regio- and stereospecific manner, being (9R)-HODE ((9R)-hydroxy-(10E,12Z)-octadecadienoate) and (13S)-HODE ((13S)-hydroxy-(9Z,11E)-octadecadienoate) its major products. The polypeptide is Prostaglandin G/H synthase 1 (Mus musculus (Mouse)).